Consider the following 214-residue polypeptide: Ribosomal RNA small subunit methyltransferase G (214 aa).

Residues glycine 81, methionine 86, 132-133, and arginine 147 contribute to the S-adenosyl-L-methionine site; that span reads VE.

The protein belongs to the methyltransferase superfamily. RNA methyltransferase RsmG family.

The protein localises to the cytoplasm. It catalyses the reaction guanosine(527) in 16S rRNA + S-adenosyl-L-methionine = N(7)-methylguanosine(527) in 16S rRNA + S-adenosyl-L-homocysteine. In terms of biological role, specifically methylates the N7 position of guanine in position 527 of 16S rRNA. This Pseudomonas aeruginosa (strain LESB58) protein is Ribosomal RNA small subunit methyltransferase G.